We begin with the raw amino-acid sequence, 119 residues long: Ribonuclease P protein component (119 aa).

It belongs to the RnpA family. As to quaternary structure, consists of a catalytic RNA component (M1 or rnpB) and a protein subunit.

It carries out the reaction Endonucleolytic cleavage of RNA, removing 5'-extranucleotides from tRNA precursor.. In terms of biological role, RNaseP catalyzes the removal of the 5'-leader sequence from pre-tRNA to produce the mature 5'-terminus. It can also cleave other RNA substrates such as 4.5S RNA. The protein component plays an auxiliary but essential role in vivo by binding to the 5'-leader sequence and broadening the substrate specificity of the ribozyme. This chain is Ribonuclease P protein component, found in Serratia proteamaculans (strain 568).